Here is a 251-residue protein sequence, read N- to C-terminus: Ribonuclease PH (251 aa).

Phosphate-binding positions include Arg-87 and 125–127 (GTR).

It belongs to the RNase PH family. As to quaternary structure, homohexameric ring arranged as a trimer of dimers.

The enzyme catalyses tRNA(n+1) + phosphate = tRNA(n) + a ribonucleoside 5'-diphosphate. In terms of biological role, phosphorolytic 3'-5' exoribonuclease that plays an important role in tRNA 3'-end maturation. Removes nucleotide residues following the 3'-CCA terminus of tRNAs; can also add nucleotides to the ends of RNA molecules by using nucleoside diphosphates as substrates, but this may not be physiologically important. Probably plays a role in initiation of 16S rRNA degradation (leading to ribosome degradation) during starvation. The chain is Ribonuclease PH from Saccharopolyspora erythraea (strain ATCC 11635 / DSM 40517 / JCM 4748 / NBRC 13426 / NCIMB 8594 / NRRL 2338).